The following is a 246-amino-acid chain: UDP-N-acetyl-D-mannosaminuronic acid transferase (246 aa).

The protein belongs to the glycosyltransferase 26 family.

It catalyses the reaction UDP-N-acetyl-alpha-D-mannosaminouronate + N-acetyl-alpha-D-glucosaminyl-di-trans,octa-cis-undecaprenyl diphosphate = beta-D-ManNAcA-(1-&gt;4)-alpha-D-GlcNAc-di-trans,octa-cis-undecaprenyl diphosphate + UDP + H(+). It functions in the pathway bacterial outer membrane biogenesis; enterobacterial common antigen biosynthesis. Functionally, catalyzes the synthesis of Und-PP-GlcNAc-ManNAcA (Lipid II), the second lipid-linked intermediate involved in enterobacterial common antigen (ECA) synthesis. The sequence is that of UDP-N-acetyl-D-mannosaminuronic acid transferase from Escherichia fergusonii (strain ATCC 35469 / DSM 13698 / CCUG 18766 / IAM 14443 / JCM 21226 / LMG 7866 / NBRC 102419 / NCTC 12128 / CDC 0568-73).